A 404-amino-acid chain; its full sequence is Ubiquitin-like modifier-activating enzyme 5 (404 aa).

S45 is modified (phosphoserine). Residues G83, D104, K127, N150, and N184 each coordinate ATP. Zn(2+) is bound by residues C226 and C229. C250 acts as the Glycyl thioester intermediate in catalysis. Zn(2+) contacts are provided by C303 and C308. Residues 334–346 (IIHEDNEWGIELV) carry the UFM1-interacting sequence (UIS) motif. The interval 347 to 377 (SEISEEELKKSSGPIPDLPEGIIVAYTVPQK) is linker. S358 and S393 each carry phosphoserine. Positions 389–404 (DSGESLEDLMAKMKNI) match the UFC1-binding sequence (UFC) motif.

Belongs to the ubiquitin-activating E1 family. UBA5 subfamily. Homodimer; homodimerization is required for UFM1 activation. Interacts (via UIS motif) with UFM1; binds UFM1 via a trans-binding mechanism in which UFM1 interacts with distinct sites in both subunits of the UBA5 homodimer. Interacts (via C-terminus) with UFC1. Interacts (via UIS motif) with GABARAPL2 and, with lower affinity, with GABARAP and GABARAPL1.

The protein localises to the cytoplasm. It localises to the nucleus. The protein resides in the endoplasmic reticulum membrane. It is found in the golgi apparatus. Its function is as follows. E1-like enzyme which specifically catalyzes the first step in ufmylation. Activates UFM1 by first adenylating its C-terminal glycine residue with ATP, and thereafter linking this residue to the side chain of a cysteine residue in E1, yielding a UFM1-E1 thioester and free AMP. Activates UFM1 via a trans-binding mechanism, in which UFM1 interacts with distinct sites in both subunits of the UBA5 homodimer. Trans-binding also promotes stabilization of the UBA5 homodimer, and enhances ATP-binding. Transfer of UFM1 from UBA5 to the E2-like enzyme UFC1 also takes place using a trans mechanism. Ufmylation plays a key role in various processes, such as ribosome recycling, response to DNA damage, interferon response or reticulophagy (also called ER-phagy). Ufmylation is essential for erythroid differentiation of both megakaryocytes and erythrocytes. The polypeptide is Ubiquitin-like modifier-activating enzyme 5 (Bos taurus (Bovine)).